A 147-amino-acid polypeptide reads, in one-letter code: Hemoglobin subunit epsilon (147 aa).

The Globin domain occupies 3-147; sequence HFTPEEKCII…VAIALAHKYH (145 aa). The residue at position 51 (S51) is a Phosphoserine. 2 residues coordinate heme b: H64 and H93.

Belongs to the globin family. Red blood cells.

Hemoglobin epsilon chain is a beta-type chain found in early embryos. In Oryctolagus cuniculus (Rabbit), this protein is Hemoglobin subunit epsilon (HBE1).